Here is a 700-residue protein sequence, read N- to C-terminus: Hedgehog-interacting protein (700 aa).

A signal peptide spans 1-17; that stretch reads MLKMLSFKLLLLAVALG. N-linked (GlcNAc...) asparagine glycosylation occurs at N99. 11 disulfides stabilise this stretch: C216-C536, C218-C543, C402-C624, C435-C452, C500-C594, C608-C617, C612-C623, C625-C634, C639-C649, C643-C655, and C657-C666. The tract at residues 376–388 is interaction with SHH zinc binding site; that stretch reads LDDMEEMDGLSDF. D383 lines the Zn(2+) pocket. Residues N416, N447, and N459 are each glycosylated (N-linked (GlcNAc...) asparagine). 2 EGF-like domains span residues 607–634 and 635–667; these read ECSR…GDFC and RTAK…PQCE.

Belongs to the HHIP family. As to quaternary structure, interacts with all three hedgehog family members, SHH, IHH and DHH. In terms of tissue distribution, widely expressed in fetal and adult tissues. Highest expression in adult heart, liver and pancreas, and in fetal kidney.

It localises to the cell membrane. Its subcellular location is the secreted. The protein localises to the cytoplasm. Functionally, modulates hedgehog signaling in several cell types including brain and lung through direct interaction with members of the hedgehog family. This Homo sapiens (Human) protein is Hedgehog-interacting protein (HHIP).